Here is a 333-residue protein sequence, read N- to C-terminus: Holliday junction branch migration complex subunit RuvB (333 aa).

The interval 1-182 (MEERMVSAEA…FGVMARLEYY (182 aa)) is large ATPase domain (RuvB-L). Residues Ile21, Arg22, Gly63, Lys66, Thr67, Thr68, 129–131 (EDY), Arg172, Tyr182, and Arg219 contribute to the ATP site. Residue Thr67 participates in Mg(2+) binding. The small ATPAse domain (RuvB-S) stretch occupies residues 183–253 (NVEELTTIIE…RAIESLERLQ (71 aa)). The tract at residues 256–333 (RLGLDHIDHK…EHFNMEVPNK (78 aa)) is head domain (RuvB-H). DNA is bound by residues Arg311 and Arg316.

The protein belongs to the RuvB family. In terms of assembly, homohexamer. Forms an RuvA(8)-RuvB(12)-Holliday junction (HJ) complex. HJ DNA is sandwiched between 2 RuvA tetramers; dsDNA enters through RuvA and exits via RuvB. An RuvB hexamer assembles on each DNA strand where it exits the tetramer. Each RuvB hexamer is contacted by two RuvA subunits (via domain III) on 2 adjacent RuvB subunits; this complex drives branch migration. In the full resolvosome a probable DNA-RuvA(4)-RuvB(12)-RuvC(2) complex forms which resolves the HJ.

Its subcellular location is the cytoplasm. It catalyses the reaction ATP + H2O = ADP + phosphate + H(+). The RuvA-RuvB-RuvC complex processes Holliday junction (HJ) DNA during genetic recombination and DNA repair, while the RuvA-RuvB complex plays an important role in the rescue of blocked DNA replication forks via replication fork reversal (RFR). RuvA specifically binds to HJ cruciform DNA, conferring on it an open structure. The RuvB hexamer acts as an ATP-dependent pump, pulling dsDNA into and through the RuvAB complex. RuvB forms 2 homohexamers on either side of HJ DNA bound by 1 or 2 RuvA tetramers; 4 subunits per hexamer contact DNA at a time. Coordinated motions by a converter formed by DNA-disengaged RuvB subunits stimulates ATP hydrolysis and nucleotide exchange. Immobilization of the converter enables RuvB to convert the ATP-contained energy into a lever motion, pulling 2 nucleotides of DNA out of the RuvA tetramer per ATP hydrolyzed, thus driving DNA branch migration. The RuvB motors rotate together with the DNA substrate, which together with the progressing nucleotide cycle form the mechanistic basis for DNA recombination by continuous HJ branch migration. Branch migration allows RuvC to scan DNA until it finds its consensus sequence, where it cleaves and resolves cruciform DNA. The chain is Holliday junction branch migration complex subunit RuvB from Halalkalibacterium halodurans (strain ATCC BAA-125 / DSM 18197 / FERM 7344 / JCM 9153 / C-125) (Bacillus halodurans).